The sequence spans 74 residues: Homeobox protein H40 (74 aa).

The homeobox DNA-binding region spans 8-67 (ARRARTAFTYEQLVALENKFKTTRYLSVCERLNLALSLSLTETQVKIWFQNRRTKWKKQN).

Its subcellular location is the nucleus. The sequence is that of Homeobox protein H40 from Apis mellifera (Honeybee).